The chain runs to 1003 residues: Translation initiation factor IF-2 (1003 aa).

The disordered stretch occupies residues 36 to 392 (SSTIEPPVVK…RQKRNEYESM (357 aa)). Residues 62-151 (AAKPAAAKPA…PKPAAAAKPA (90 aa)) are compositionally biased toward low complexity. Composition is skewed to pro residues over residues 178–190 (DGMP…PAPK) and 213–230 (PRPG…PGGG). Composition is skewed to gly residues over residues 231 to 243 (PRPQ…GGQR) and 255 to 271 (GNRG…GPRP). Residues 273–286 (GGPRPQGGSRPQGG) show a composition bias toward low complexity. Gly residues predominate over residues 329–372 (GKGGRGGQAGGGAGGGFNRGGGTGGGAGRGGRRGGTAGAFGRPG). Residues 376-385 (RRGRKSKRQK) show a composition bias toward basic residues. The 173-residue stretch at 498–670 (KRPPVVTVMG…VCLTADAELD (173 aa)) folds into the tr-type G domain. Positions 507-514 (GHVDHGKT) are G1. 507-514 (GHVDHGKT) contacts GTP. Positions 532-536 (GITQG) are G2. Residues 557–560 (DTPG) are G3. Residues 557–561 (DTPGH) and 611–614 (NKID) each bind GTP. A G4 region spans residues 611 to 614 (NKID). Positions 647-649 (SAK) are G5.

It belongs to the TRAFAC class translation factor GTPase superfamily. Classic translation factor GTPase family. IF-2 subfamily.

The protein localises to the cytoplasm. In terms of biological role, one of the essential components for the initiation of protein synthesis. Protects formylmethionyl-tRNA from spontaneous hydrolysis and promotes its binding to the 30S ribosomal subunits. Also involved in the hydrolysis of GTP during the formation of the 70S ribosomal complex. This Corynebacterium glutamicum (strain R) protein is Translation initiation factor IF-2.